The following is a 607-amino-acid chain: Polyadenylate-binding protein 1-like (607 aa).

4 RRM domains span residues 11-89 (SSLY…WSHR), 99-175 (GNIF…HFKS), 191-268 (TNIY…RAQK), and 294-370 (VNLY…LAQR). Positions 523–600 (HQPLTVSMLA…AVAVLQVHRE (78 aa)) constitute a PABC domain.

The protein belongs to the polyadenylate-binding protein type-1 family. As to expression, expressed in ovary and testis.

It localises to the cytoplasm. Poly(A)-binding protein involved in oocyte maturation and early embryo development. It is required for cytosolic mRNA polyadenylation and translational activation of maternally stored mRNA in oocytes. In Mus musculus (Mouse), this protein is Polyadenylate-binding protein 1-like.